We begin with the raw amino-acid sequence, 291 residues long: Pantothenate synthetase (291 aa).

Position 30 to 37 (30 to 37 (MGYLHVGH)) interacts with ATP. Residue His37 is the Proton donor of the active site. Gln61 lines the (R)-pantoate pocket. Gln61 serves as a coordination point for beta-alanine. 147–150 (GEKD) contributes to the ATP binding site. (R)-pantoate is bound at residue Gln153. Residues Val176 and 184-187 (CSSR) contribute to the ATP site.

It belongs to the pantothenate synthetase family. As to quaternary structure, homodimer.

It localises to the cytoplasm. It carries out the reaction (R)-pantoate + beta-alanine + ATP = (R)-pantothenate + AMP + diphosphate + H(+). It participates in cofactor biosynthesis; (R)-pantothenate biosynthesis; (R)-pantothenate from (R)-pantoate and beta-alanine: step 1/1. Functionally, catalyzes the condensation of pantoate with beta-alanine in an ATP-dependent reaction via a pantoyl-adenylate intermediate. This Rhizobium meliloti (strain 1021) (Ensifer meliloti) protein is Pantothenate synthetase.